Consider the following 826-residue polypeptide: MAPSKKRTSVPDDDFVFTLSDDENDVLENGADEGDEQADEETASGSKKRKRETAEAPKGKNKKQKQLKQSKKGKGAAVAGSDGEEEEEGDEEEAADAGEDDGALDSEFEFDVGGHATAGVIEGFDGWETQNGDASANKNGDKKAVDIDDIISRRKEQKDAELKRKLKKEEKRKRMEESEDEAEAEDVESDGDMSVDFQDDELLAADGFGMGADGEDESGESDAGDGAGSDEENDSDDNGDDEGDADDDDAASDNDSVATPVGHPDDEVASDDESGAESEVDAEEAEKRKAFFAPEEKTTEEPTSKRSFQDFNLSRPILRGLASVNFTTPTPIQQKTIPVALLGKDIVGSAVTGSGKTAAFVVPILERLLFRPRKVPTSRVAILMPTRELAVQCYNVATKLATHTDVTFCQLVGGFSLREQENILKKRPDVIIATPGRFIDHMRNSPSFTVDTLEILVLDEADRMLEDGFADELNEILTTIPKSRQTMLFSATMTDSVDKLIRVGLNRPVRLMVDSKKNTSMNLTQEFVRLRPGREGKRLGYLLYLCSEIFTGRVIVFFRQKKEAHRVRIVFGLLGLKAAELHGSMSQEQRIKSVESFREGKVAFLLATDLASRGLDIKGVETVINYEAPQSHEIYLHRVGRTARAGRSGRACTIAADPDRKVVKAAVRAGKAQGAKIASRVVEPAVADQWAAKVEALEEEIEEVLKEEKLEKHMAQAEMQVTKGENLMKHGAEIMSRPKRTWFETERDKRASRKLGATELNGPSKKDKVKLSNKDKKRLDDSRQRHEGNQGWKKGKTEREAPKQAKTKGGKNQSDKKNKNKMKGKK.

Residues 1–308 (MAPSKKRTSV…TEEPTSKRSF (308 aa)) are disordered. The segment covering 11 to 42 (PDDDFVFTLSDDENDVLENGADEGDEQADEET) has biased composition (acidic residues). Positions 59-74 (GKNKKQKQLKQSKKGK) are enriched in basic residues. Over residues 82 to 110 (DGEEEEEGDEEEAADAGEDDGALDSEFEF) the composition is skewed to acidic residues. The segment covering 128 to 138 (ETQNGDASANK) has biased composition (polar residues). Over residues 139–176 (NGDKKAVDIDDIISRRKEQKDAELKRKLKKEEKRKRME) the composition is skewed to basic and acidic residues. Composition is skewed to acidic residues over residues 177 to 203 (ESED…DELL), 213 to 252 (DGED…DAAS), and 267 to 284 (EVAS…DAEE). Residues 285–308 (AEKRKAFFAPEEKTTEEPTSKRSF) show a composition bias toward basic and acidic residues. The short motif at 306–334 (RSFQDFNLSRPILRGLASVNFTTPTPIQQ) is the Q motif element. Residues 337–511 (IPVALLGKDI…RVGLNRPVRL (175 aa)) form the Helicase ATP-binding domain. 350–357 (AVTGSGKT) lines the ATP pocket. A DEAD box motif is present at residues 459 to 462 (DEAD). A Helicase C-terminal domain is found at 538–690 (RLGYLLYLCS…VVEPAVADQW (153 aa)). The segment at 731–826 (GAEIMSRPKR…KNKNKMKGKK (96 aa)) is disordered. Positions 764 to 788 (SKKDKVKLSNKDKKRLDDSRQRHEG) are enriched in basic and acidic residues.

The protein belongs to the DEAD box helicase family. DDX27/DRS1 subfamily. In terms of assembly, associates with pre-ribosomal particles.

It localises to the nucleus. Its subcellular location is the nucleolus. The catalysed reaction is ATP + H2O = ADP + phosphate + H(+). Functionally, ATP-binding RNA helicase involved in ribosome assembly. The chain is ATP-dependent RNA helicase drs1 (drs1) from Aspergillus clavatus (strain ATCC 1007 / CBS 513.65 / DSM 816 / NCTC 3887 / NRRL 1 / QM 1276 / 107).